The primary structure comprises 282 residues: NAC domain-containing protein 1 (282 aa).

Positions 9 to 161 (LPPGFRFHPT…DWVLCRIYKK (153 aa)) constitute an NAC domain. The DNA-binding element occupies 106–167 (VGIKKALVFY…IYKKKNLGRT (62 aa)). A coiled-coil region spans residues 161 to 188 (KKNLGRTIEMMKVEEEELEAQNVSTTNN).

As to expression, expressed in roots, stem, flowers, and leaves.

It is found in the nucleus. Transcription factor that binds DNA motifs 5'-CGT[AG](5N)NACG[ACT][AC][AT][ACG][ACT]-3' and 5'-CACG[ACT][AC][AT][AGT][CT]-3' in target genes promoters. Promotes leaf senescence and reduces fruit yield and sugar content, probably by establishing abscisic acid (ABA) homeostasis. In Solanum lycopersicum (Tomato), this protein is NAC domain-containing protein 1.